Reading from the N-terminus, the 309-residue chain is HPr kinase/phosphorylase (309 aa).

Catalysis depends on residues His138 and Lys159. 153–160 (GDSGIGKS) contacts ATP. Position 160 (Ser160) interacts with Mg(2+). The active-site Proton acceptor; for phosphorylation activity. Proton donor; for dephosphorylation activity is Asp177. The tract at residues 201-210 (LEIRGVGIID) is important for the catalytic mechanism of both phosphorylation and dephosphorylation. Position 202 (Glu202) interacts with Mg(2+). Arg243 is an active-site residue. The segment at 264–269 (PVKTGR) is important for the catalytic mechanism of dephosphorylation.

It belongs to the HPrK/P family. Homohexamer. Requires Mg(2+) as cofactor.

The catalysed reaction is [HPr protein]-L-serine + ATP = [HPr protein]-O-phospho-L-serine + ADP + H(+). It carries out the reaction [HPr protein]-O-phospho-L-serine + phosphate + H(+) = [HPr protein]-L-serine + diphosphate. Functionally, catalyzes the ATP- as well as the pyrophosphate-dependent phosphorylation of a specific serine residue in HPr, a phosphocarrier protein of the phosphoenolpyruvate-dependent sugar phosphotransferase system (PTS). HprK/P also catalyzes the pyrophosphate-producing, inorganic phosphate-dependent dephosphorylation (phosphorolysis) of seryl-phosphorylated HPr (P-Ser-HPr). The two antagonistic activities of HprK/P are regulated by several intracellular metabolites, which change their concentration in response to the absence or presence of rapidly metabolisable carbon sources (glucose, fructose, etc.) in the growth medium. Therefore, by controlling the phosphorylation state of HPr, HPrK/P is a sensor enzyme that plays a major role in the regulation of carbon metabolism and sugar transport: it mediates carbon catabolite repression (CCR), and regulates PTS-catalyzed carbohydrate uptake and inducer exclusion. This Streptococcus thermophilus (strain CNRZ 1066) protein is HPr kinase/phosphorylase.